We begin with the raw amino-acid sequence, 246 residues long: Orotidine 5'-phosphate decarboxylase (246 aa).

Substrate-binding positions include Asp-22, Lys-44, 71–80 (DLKFHDIPNT), Thr-131, Arg-192, Gln-201, Gly-221, and Arg-222. Residue Lys-73 is the Proton donor of the active site.

This sequence belongs to the OMP decarboxylase family. Type 1 subfamily. Homodimer.

It carries out the reaction orotidine 5'-phosphate + H(+) = UMP + CO2. Its pathway is pyrimidine metabolism; UMP biosynthesis via de novo pathway; UMP from orotate: step 2/2. In terms of biological role, catalyzes the decarboxylation of orotidine 5'-monophosphate (OMP) to uridine 5'-monophosphate (UMP). The sequence is that of Orotidine 5'-phosphate decarboxylase from Yersinia enterocolitica serotype O:8 / biotype 1B (strain NCTC 13174 / 8081).